The primary structure comprises 1037 residues: Ribonuclease E (1037 aa).

3 disordered regions span residues 1–23 (MAED…LPER), 47–90 (FDGR…ETPV), and 106–369 (VSEA…PILS). Residues 47 to 67 (FDGRQRSAHSTVDKADAERVR) show a composition bias toward basic and acidic residues. Low complexity-rich tracts occupy residues 68–90 (AALT…ETPV) and 106–126 (VSEA…PAAE). 2 stretches are compositionally biased toward acidic residues: residues 127–141 (AEAE…EAET) and 196–226 (VVDD…DDDQ). Basic residues predominate over residues 230–242 (PRRRRRGRRGRGR). The span at 248-284 (NDDATSDADTDSTEDQTDGDEQESGEDSDDSGDEDST) shows a compositional bias: acidic residues. Residues 291–301 (RRRRRRRRRKS) show a composition bias toward basic residues. Positions 320 to 335 (VHERAPRTERSDKSDD) are enriched in basic and acidic residues. In terms of domain architecture, S1 motif spans 427–504 (GNIYLGIVQN…GHKGARLTTQ (78 aa)). Residues 561-589 (EDIRSDVERLQKRWSEIEAKAAEVTEKKA) are a coiled coil. The Mg(2+) site is built by Asp-694 and Asp-738. Zn(2+) contacts are provided by Cys-796 and Cys-799. The interval 810-1037 (PIDSASSNGG…ARPAGPPSHD (228 aa)) is disordered. Residues 834–843 (RRGKRGKKGA) show a composition bias toward basic residues. Residues 844 to 864 (ARTEEVHVAKVPDHTPGEHPM) are compositionally biased toward basic and acidic residues. A compositionally biased stretch (acidic residues) spans 879–891 (EDHEDHEDHETAE). Residues 897–913 (EVRDDTRDEHDADERAH) are compositionally biased toward basic and acidic residues. Positions 923-1006 (GDEDLDDSDE…DSDSDEDEEP (84 aa)) are enriched in acidic residues.

This sequence belongs to the RNase E/G family. Assembles into a homotetramer formed by a dimer of dimers. Interacts with DNA-binding protein HhupB. The cofactor is Mg(2+). Zn(2+) is required as a cofactor.

The protein resides in the cytoplasm. The enzyme catalyses Endonucleolytic cleavage of single-stranded RNA in A- and U-rich regions.. Its function is as follows. Endoribonuclease that plays a central role in RNA processing and decay. Plays a major role in pre-16S rRNA maturation, probably generating the mature 5'-end, and a minor role in pre-5S and pre-23S rRNA maturation. Probably also processes tRNA. RNase E and HupB jointly contribute to cellular adaptation to changing growth conditions and survival during antibiotic treatment. Overexpression or depletion leads to changes in gene expression; overexpression induces metabolic slowdown and cell stress while depleted strains grow less well than induced strains. This Mycolicibacterium smegmatis (strain ATCC 700084 / mc(2)155) (Mycobacterium smegmatis) protein is Ribonuclease E (rne).